Reading from the N-terminus, the 185-residue chain is Elongation factor P 1 (185 aa).

This sequence belongs to the elongation factor P family.

The protein resides in the cytoplasm. It participates in protein biosynthesis; polypeptide chain elongation. Its function is as follows. Involved in peptide bond synthesis. Stimulates efficient translation and peptide-bond synthesis on native or reconstituted 70S ribosomes in vitro. Probably functions indirectly by altering the affinity of the ribosome for aminoacyl-tRNA, thus increasing their reactivity as acceptors for peptidyl transferase. This Chlamydia pneumoniae (Chlamydophila pneumoniae) protein is Elongation factor P 1 (efp1).